The sequence spans 95 residues: uncharacterized protein (95 aa).

Residues 45 to 65 traverse the membrane as a helical segment; sequence WLSGLAFVLQAALVMPVVLAF.

It localises to the membrane. This is an uncharacterized protein from Mycobacterium leprae (strain TN).